The chain runs to 231 residues: NADH-ubiquinone oxidoreductase chain 4 (231 aa).

The next 7 helical transmembrane spans lie at 1-21 (PIAG…YGII), 34-54 (MFLP…LTCL), 63-85 (IAYS…TPWG), 89-111 (AMAL…NTTY), 128-148 (ILPM…AIPP), 156-176 (LLIM…LGLS), and 211-231 (LLMI…ELII).

The protein belongs to the complex I subunit 4 family.

The protein resides in the mitochondrion membrane. It carries out the reaction a ubiquinone + NADH + 5 H(+)(in) = a ubiquinol + NAD(+) + 4 H(+)(out). In terms of biological role, core subunit of the mitochondrial membrane respiratory chain NADH dehydrogenase (Complex I) that is believed to belong to the minimal assembly required for catalysis. Complex I functions in the transfer of electrons from NADH to the respiratory chain. The immediate electron acceptor for the enzyme is believed to be ubiquinone. The chain is NADH-ubiquinone oxidoreductase chain 4 (MT-ND4) from Agkistrodon piscivorus piscivorus (Eastern cottonmouth).